Here is a 592-residue protein sequence, read N- to C-terminus: Aspartate--tRNA ligase (592 aa).

Glutamate 171 is an L-aspartate binding site. The interval 195–198 is aspartate; it reads QLFK. L-aspartate is bound at residue arginine 217. Residues 217 to 219 and glutamine 226 contribute to the ATP site; that span reads RDE. Residue histidine 448 coordinates L-aspartate. Glutamate 482 lines the ATP pocket. Arginine 489 provides a ligand contact to L-aspartate. 534–537 serves as a coordination point for ATP; that stretch reads GLDR.

It belongs to the class-II aminoacyl-tRNA synthetase family. Type 1 subfamily. In terms of assembly, homodimer.

It localises to the cytoplasm. It catalyses the reaction tRNA(Asp) + L-aspartate + ATP = L-aspartyl-tRNA(Asp) + AMP + diphosphate. Its function is as follows. Catalyzes the attachment of L-aspartate to tRNA(Asp) in a two-step reaction: L-aspartate is first activated by ATP to form Asp-AMP and then transferred to the acceptor end of tRNA(Asp). The sequence is that of Aspartate--tRNA ligase from Vibrio parahaemolyticus serotype O3:K6 (strain RIMD 2210633).